Reading from the N-terminus, the 31-residue chain is Conotoxin pc6b (31 aa).

3 cysteine pairs are disulfide-bonded: C2–C20, C9–C25, and C19–C29.

This sequence belongs to the conotoxin O1 superfamily. In terms of tissue distribution, expressed by the venom duct.

Its subcellular location is the secreted. This Conus pictus (Cone snail) protein is Conotoxin pc6b.